The following is a 432-amino-acid chain: UDP-N-acetylglucosamine 1-carboxyvinyltransferase (432 aa).

A phosphoenolpyruvate-binding site is contributed by 22–23; the sequence is KN. UDP-N-acetyl-alpha-D-glucosamine is bound at residue Arg-101. Cys-125 serves as the catalytic Proton donor. 2-(S-cysteinyl)pyruvic acid O-phosphothioketal is present on Cys-125. UDP-N-acetyl-alpha-D-glucosamine is bound by residues 130-134, Asp-315, and Ile-337; that span reads RPVDL.

This sequence belongs to the EPSP synthase family. MurA subfamily.

The protein resides in the cytoplasm. The catalysed reaction is phosphoenolpyruvate + UDP-N-acetyl-alpha-D-glucosamine = UDP-N-acetyl-3-O-(1-carboxyvinyl)-alpha-D-glucosamine + phosphate. The protein operates within cell wall biogenesis; peptidoglycan biosynthesis. Functionally, cell wall formation. Adds enolpyruvyl to UDP-N-acetylglucosamine. The sequence is that of UDP-N-acetylglucosamine 1-carboxyvinyltransferase from Paramagnetospirillum magneticum (strain ATCC 700264 / AMB-1) (Magnetospirillum magneticum).